A 296-amino-acid polypeptide reads, in one-letter code: Cytochrome bc1 complex cytochrome c subunit (296 aa).

Residues 1–19 (MMETNPQTSEGAGKAQSSA) are compositionally biased toward polar residues. Residues 1-27 (MMETNPQTSEGAGKAQSSAKKVKNRRK) are disordered. The helical transmembrane segment at 32–52 (VAGAMALTIGLSGAGILATAI) threads the bilayer. 2 consecutive Cytochrome c domains span residues 67–147 (ALIA…AANG) and 177–255 (LDVS…KSTK). The heme c site is built by Cys-80, Cys-83, His-84, Cys-190, Cys-193, and His-194. A helical transmembrane segment spans residues 274 to 294 (GLFMWGIGIMVLIAAAMWIGS).

As to quaternary structure, the cytochrome bc1 complex is composed of a cytochrome b (QcrB), the Rieske iron-sulfur protein (QcrA) and a diheme cytochrome c (QcrC) subunit. The bc1 complex forms a supercomplex with cytochrome c oxidase (cytochrome aa3). Post-translationally, binds 2 heme c groups covalently per subunit.

It is found in the cell membrane. It catalyses the reaction a quinol + 2 Fe(III)-[cytochrome c](out) = a quinone + 2 Fe(II)-[cytochrome c](out) + 2 H(+)(out). Cytochrome c1 subunit of the cytochrome bc1 complex, an essential component of the respiratory electron transport chain required for ATP synthesis. The bc1 complex catalyzes the oxidation of menaquinol and the reduction of cytochrome c in the respiratory chain. The bc1 complex operates through a Q-cycle mechanism that couples electron transfer to generation of the proton gradient that drives ATP synthesis. The chain is Cytochrome bc1 complex cytochrome c subunit (qcrC) from Corynebacterium efficiens (strain DSM 44549 / YS-314 / AJ 12310 / JCM 11189 / NBRC 100395).